Reading from the N-terminus, the 265-residue chain is Bidirectional sugar transporter SWEET7b (265 aa).

Residues 1 to 9 (MVSPDLIRN) lie on the Extracellular side of the membrane. The chain crosses the membrane as a helical span at residues 10 to 30 (MVGIVGNIISFGLFLSPVPTF). The region spanning 10-97 (MVGIVGNIIS…TIFFLFSDKK (88 aa)) is the MtN3/slv 1 domain. Residues 31–45 (YRIIKNKDVQDFKAD) are Cytoplasmic-facing. A helical membrane pass occupies residues 46-66 (PYLATLLNCMLWVFYGLPIVH). The Extracellular segment spans residues 67-69 (PNS). A helical membrane pass occupies residues 70-90 (ILVVTINGIGLVIEAVYLTIF). The Cytoplasmic segment spans residues 91–101 (FLFSDKKNKKK). A helical transmembrane segment spans residues 102–122 (MGVVLATEALFMAAVVLGVLL). The Extracellular portion of the chain corresponds to 123–131 (GAHTHQRRS). The helical transmembrane segment at 132–152 (LIVGILCVIFGTIMYSSPLTI) threads the bilayer. The MtN3/slv 2 domain occupies 133-215 (IVGILCVIFG…QLILYAIYYR (83 aa)). Over 153 to 165 (MSQVVKTKSVEYM) the chain is Cytoplasmic. Residues 166-186 (PLLLSVVSFLNGLCWTSYALI) form a helical membrane-spanning segment. The Extracellular portion of the chain corresponds to 187–189 (RLD). The helical transmembrane segment at 190-210 (IFITIPNGLGVLFALMQLILY) threads the bilayer. Residues 211–265 (AIYYRTIPKKQDKNLELPTVAPVAKDTSIVTPVSKDDDVDGGNASHVTINITIEL) lie on the Cytoplasmic side of the membrane.

Belongs to the SWEET sugar transporter family. As to quaternary structure, forms homooligomers and/or heterooligomers.

It is found in the cell membrane. Its function is as follows. Mediates both low-affinity uptake and efflux of sugar across the plasma membrane. This is Bidirectional sugar transporter SWEET7b (SWEET7B) from Oryza sativa subsp. japonica (Rice).